The primary structure comprises 102 residues: Beta-defensin 116 (102 aa).

The N-terminal stretch at 1–23 is a signal peptide; the sequence is MSVMKPCLMTIAILMILAQKTPG. 3 disulfides stabilise this stretch: cysteine 40–cysteine 67, cysteine 47–cysteine 61, and cysteine 51–cysteine 68. The segment at 83 to 102 is disordered; sequence EDYDSNSNLSVTNSSSYSHI. Residues 87-102 are compositionally biased toward low complexity; it reads SNSNLSVTNSSSYSHI.

It belongs to the beta-defensin family.

The protein resides in the secreted. Functionally, has antibacterial activity. The polypeptide is Beta-defensin 116 (DEFB116) (Homo sapiens (Human)).